The chain runs to 342 residues: MSINIEHAIIHEISQDSQGQLRCRLRPQPLLNGQAVEVMLDELHQTYTGKAGKGFGYFGIHGDDGEANPAFANALTQYRGGDLGFVEFSGQASKLLQEELSKYDFSQGGFLLMSCYTSITSDYLFVALLSAKSSMTVLDDMELSQNNHLDLNNIQLAARIDLTEWQADKDSRKYISFIRGRAGRKVADFFLDFMGCVEGVNTKAQNKTLMNAVEDFVASSELTKDERQQCRNKVFEYCSERFDEGADIEIKDLADELADQGMDSFYDFARGGSYDLDEEFPADKSTLRQLKKFSGTGGGVTLSFDGGHLGQRVIYDPISDTILIKGVPANLKDQLDRRLKGE.

The protein belongs to the YejK family.

The protein localises to the cytoplasm. Its subcellular location is the nucleoid. This is Nucleoid-associated protein Sbal223_1817 from Shewanella baltica (strain OS223).